Reading from the N-terminus, the 424-residue chain is Glutamyl-tRNA reductase (424 aa).

Substrate is bound by residues 51–54 (TCNR), Ser-99, 104–106 (EDQ), and Gln-110. Catalysis depends on Cys-52, which acts as the Nucleophile. 179-184 (GGGEMG) contributes to the NADP(+) binding site.

The protein belongs to the glutamyl-tRNA reductase family. As to quaternary structure, homodimer.

It catalyses the reaction (S)-4-amino-5-oxopentanoate + tRNA(Glu) + NADP(+) = L-glutamyl-tRNA(Glu) + NADPH + H(+). The protein operates within porphyrin-containing compound metabolism; protoporphyrin-IX biosynthesis; 5-aminolevulinate from L-glutamyl-tRNA(Glu): step 1/2. Its function is as follows. Catalyzes the NADPH-dependent reduction of glutamyl-tRNA(Glu) to glutamate 1-semialdehyde (GSA). This chain is Glutamyl-tRNA reductase, found in Methanocorpusculum labreanum (strain ATCC 43576 / DSM 4855 / Z).